The primary structure comprises 155 residues: Small ribosomal subunit protein uS15 (155 aa).

Basic residues predominate over residues Met1 to Gly10. A disordered region spans residues Met1–Asp66. Over residues Glu21–Ile33 the composition is skewed to acidic residues. Residues Glu34–His45 are compositionally biased toward basic and acidic residues.

The protein belongs to the universal ribosomal protein uS15 family. As to quaternary structure, part of the 30S ribosomal subunit.

The sequence is that of Small ribosomal subunit protein uS15 from Halobacterium salinarum (strain ATCC 700922 / JCM 11081 / NRC-1) (Halobacterium halobium).